We begin with the raw amino-acid sequence, 322 residues long: tRNA-dihydrouridine synthase B (322 aa).

FMN contacts are provided by residues 16–18 (PMA) and glutamine 70. Cysteine 100 serves as the catalytic Proton donor. FMN contacts are provided by residues lysine 139, 200-202 (NGD), and 224-225 (GR).

This sequence belongs to the Dus family. DusB subfamily. FMN serves as cofactor.

The catalysed reaction is a 5,6-dihydrouridine in tRNA + NAD(+) = a uridine in tRNA + NADH + H(+). It catalyses the reaction a 5,6-dihydrouridine in tRNA + NADP(+) = a uridine in tRNA + NADPH + H(+). Catalyzes the synthesis of 5,6-dihydrouridine (D), a modified base found in the D-loop of most tRNAs, via the reduction of the C5-C6 double bond in target uridines. The protein is tRNA-dihydrouridine synthase B of Vibrio vulnificus (strain CMCP6).